The sequence spans 97 residues: Late embryogenesis abundant protein Lea5 (97 aa).

This sequence belongs to the LEA type 3 family.

This chain is Late embryogenesis abundant protein Lea5 (LEA5), found in Citrus sinensis (Sweet orange).